The sequence spans 209 residues: Uracil phosphoribosyltransferase (209 aa).

5-phospho-alpha-D-ribose 1-diphosphate contacts are provided by residues Arg-79, Arg-104, and 131–139 (DPMLATGGS). Uracil contacts are provided by residues Ile-194 and 199 to 201 (GDA). Asp-200 contributes to the 5-phospho-alpha-D-ribose 1-diphosphate binding site.

Belongs to the UPRTase family. It depends on Mg(2+) as a cofactor.

It carries out the reaction UMP + diphosphate = 5-phospho-alpha-D-ribose 1-diphosphate + uracil. It functions in the pathway pyrimidine metabolism; UMP biosynthesis via salvage pathway; UMP from uracil: step 1/1. Its activity is regulated as follows. Allosterically activated by GTP. Catalyzes the conversion of uracil and 5-phospho-alpha-D-ribose 1-diphosphate (PRPP) to UMP and diphosphate. In Bacillus licheniformis (strain ATCC 14580 / DSM 13 / JCM 2505 / CCUG 7422 / NBRC 12200 / NCIMB 9375 / NCTC 10341 / NRRL NRS-1264 / Gibson 46), this protein is Uracil phosphoribosyltransferase.